Reading from the N-terminus, the 397-residue chain is HTH-type transcriptional regulator GalR (397 aa).

2 consecutive HTH lysR-type domains span residues 7–64 (PNLM…MRLT) and 99–156 (FQAR…LQPT). 2 DNA-binding regions (H-T-H motif) span residues 24-43 (VSRATEVLFRAQSVVTRAIA) and 116-135 (MQTVARHFGLSQPAVSAALK).

The protein belongs to the LysR transcriptional regulatory family.

In terms of biological role, transcriptional regulator for the galBCD and galTAP operons, encoding genes of the gallate degradation pathway. The polypeptide is HTH-type transcriptional regulator GalR (galR) (Pseudomonas putida (strain ATCC 47054 / DSM 6125 / CFBP 8728 / NCIMB 11950 / KT2440)).